Here is a 182-residue protein sequence, read N- to C-terminus: Small ribosomal subunit protein uS4c (182 aa).

In terms of domain architecture, S4 RNA-binding spans 82–143; the sequence is MRLDNILFRL…KQRSKALIQN (62 aa).

Belongs to the universal ribosomal protein uS4 family. In terms of assembly, part of the 30S ribosomal subunit. Contacts protein S5. The interaction surface between S4 and S5 is involved in control of translational fidelity.

It localises to the plastid. It is found in the chloroplast. Functionally, one of the primary rRNA binding proteins, it binds directly to 16S rRNA where it nucleates assembly of the body of the 30S subunit. In terms of biological role, with S5 and S12 plays an important role in translational accuracy. This Iris domestica (Leopard lily) protein is Small ribosomal subunit protein uS4c (rps4).